Reading from the N-terminus, the 366-residue chain is Putative [LysW]-aminoadipate semialdehyde/glutamate semialdehyde transaminase (366 aa).

Pyridoxal 5'-phosphate-binding positions include 90–91 (GT) and phenylalanine 117. Substrate is bound at residue arginine 120. 202 to 205 (DEVQ) provides a ligand contact to pyridoxal 5'-phosphate. Lysine 230 bears the N6-(pyridoxal phosphate)lysine mark. Serine 254 contributes to the substrate binding site. A pyridoxal 5'-phosphate-binding site is contributed by threonine 255.

Belongs to the class-III pyridoxal-phosphate-dependent aminotransferase family. LysJ subfamily. As to quaternary structure, homodimer. The cofactor is pyridoxal 5'-phosphate.

It is found in the cytoplasm. The enzyme catalyses [amino-group carrier protein]-C-terminal-gamma-(L-lysyl)-L-glutamate + 2-oxoglutarate = [amino-group carrier protein]-C-terminal-N-(1-carboxy-5-oxopentan-1-yl)-L-glutamine + L-glutamate. The catalysed reaction is [amino-group carrier protein]-C-terminal-gamma-(L-ornithyl)-L-glutamate + 2-oxoglutarate = [amino-group carrier protein]-C-terminal-gamma-(L-glutamyl-5-semialdehyde)-L-glutamate + L-glutamate. Its pathway is amino-acid biosynthesis; L-lysine biosynthesis via AAA pathway; L-lysine from L-alpha-aminoadipate (Thermus route): step 4/5. It participates in amino-acid biosynthesis; L-arginine biosynthesis. Involved in both the arginine and lysine biosynthetic pathways. The protein is Putative [LysW]-aminoadipate semialdehyde/glutamate semialdehyde transaminase of Pyrococcus horikoshii (strain ATCC 700860 / DSM 12428 / JCM 9974 / NBRC 100139 / OT-3).